The sequence spans 252 residues: Probable transcriptional regulatory protein Lxx10750 (252 aa).

Belongs to the TACO1 family.

The protein resides in the cytoplasm. The protein is Probable transcriptional regulatory protein Lxx10750 of Leifsonia xyli subsp. xyli (strain CTCB07).